Here is a 271-residue protein sequence, read N- to C-terminus: Probable L,D-transpeptidase 3 (271 aa).

Residues Val127–Gln270 form the L,D-TPase catalytic domain. His228 acts as the Proton donor/acceptor in catalysis. Cys246 serves as the catalytic Nucleophile.

It functions in the pathway cell wall biogenesis; peptidoglycan biosynthesis. Is irreversibly inactivated by the beta-lactam carbapenems via the formation of a covalent adduct resulting from acylation of the catalytic Cys. Imipenem is the most efficient drug for in vitro LdtMt3/Rv1433 inactivation. Its function is as follows. Probable L,D-transpeptidase that may perform as-yet-unknown cross-linking reactions in M.tuberculosis. Is not able to generate 3-&gt;3 cross-links in peptidoglycan, using tetrapeptide stems as acyl donor substrates. May function in the anchoring of proteins to peptidoglycan. This is Probable L,D-transpeptidase 3 from Mycobacterium tuberculosis (strain ATCC 25618 / H37Rv).